The chain runs to 189 residues: UPF0301 protein Plut_0637 (189 aa).

Belongs to the UPF0301 (AlgH) family.

The protein is UPF0301 protein Plut_0637 of Chlorobium luteolum (strain DSM 273 / BCRC 81028 / 2530) (Pelodictyon luteolum).